The chain runs to 199 residues: AICSLVLYLLTLMLMEKLSSNTVDAQEVELIWTILPAIVLILLALPSLQILYMMDEIDEPDLTLKAIGHQWYWTYEYTDFKDLSFDSYMVPTSELPSGHFRLLEVDHRVVVPMESPIRVIITAGDVLHSWAVPTLGVKTDAIPGRLNQTSFITTRPGIFYGQCSEICGANHSYMPIVVESTPLTHFENWSSLLSISSSL.

A helical transmembrane segment spans residues 1–13 (AICSLVLYLLTLM). Residues 14–26 (LMEKLSSNTVDAQ) lie on the Mitochondrial matrix side of the membrane. A helical membrane pass occupies residues 27–54 (EVELIWTILPAIVLILLALPSLQILYMM). At 55 to 199 (DEIDEPDLTL…SSLLSISSSL (145 aa)) the chain is on the mitochondrial intermembrane side. Residues His-128, Cys-163, Glu-165, Cys-167, His-171, and Met-174 each coordinate Cu cation. Glu-165 contacts Mg(2+).

It belongs to the cytochrome c oxidase subunit 2 family. Component of the cytochrome c oxidase (complex IV, CIV), a multisubunit enzyme composed of 14 subunits. The complex is composed of a catalytic core of 3 subunits MT-CO1, MT-CO2 and MT-CO3, encoded in the mitochondrial DNA, and 11 supernumerary subunits COX4I, COX5A, COX5B, COX6A, COX6B, COX6C, COX7A, COX7B, COX7C, COX8 and NDUFA4, which are encoded in the nuclear genome. The complex exists as a monomer or a dimer and forms supercomplexes (SCs) in the inner mitochondrial membrane with NADH-ubiquinone oxidoreductase (complex I, CI) and ubiquinol-cytochrome c oxidoreductase (cytochrome b-c1 complex, complex III, CIII), resulting in different assemblies (supercomplex SCI(1)III(2)IV(1) and megacomplex MCI(2)III(2)IV(2)). Found in a complex with TMEM177, COA6, COX18, COX20, SCO1 and SCO2. Interacts with TMEM177 in a COX20-dependent manner. Interacts with COX20. Interacts with COX16. Requires Cu cation as cofactor.

It is found in the mitochondrion inner membrane. The enzyme catalyses 4 Fe(II)-[cytochrome c] + O2 + 8 H(+)(in) = 4 Fe(III)-[cytochrome c] + 2 H2O + 4 H(+)(out). Its function is as follows. Component of the cytochrome c oxidase, the last enzyme in the mitochondrial electron transport chain which drives oxidative phosphorylation. The respiratory chain contains 3 multisubunit complexes succinate dehydrogenase (complex II, CII), ubiquinol-cytochrome c oxidoreductase (cytochrome b-c1 complex, complex III, CIII) and cytochrome c oxidase (complex IV, CIV), that cooperate to transfer electrons derived from NADH and succinate to molecular oxygen, creating an electrochemical gradient over the inner membrane that drives transmembrane transport and the ATP synthase. Cytochrome c oxidase is the component of the respiratory chain that catalyzes the reduction of oxygen to water. Electrons originating from reduced cytochrome c in the intermembrane space (IMS) are transferred via the dinuclear copper A center (CU(A)) of subunit 2 and heme A of subunit 1 to the active site in subunit 1, a binuclear center (BNC) formed by heme A3 and copper B (CU(B)). The BNC reduces molecular oxygen to 2 water molecules using 4 electrons from cytochrome c in the IMS and 4 protons from the mitochondrial matrix. The sequence is that of Cytochrome c oxidase subunit 2 (MT-CO2) from Casuarius bennetti (Dwarf cassowary).